We begin with the raw amino-acid sequence, 313 residues long: Olfactory receptor 4M2 (313 aa).

Over 1-25 the chain is Cytoplasmic; sequence METANYTKVTEFVLTGLSQTPEVQL. The chain crosses the membrane as a helical span at residues 26-46; it reads VLFVIFLSFYLFILPGNILII. The Extracellular segment spans residues 47-57; that stretch reads CTISLDPHLTS. A helical membrane pass occupies residues 58 to 78; sequence PMYFLLANLAFLDIWYSSITA. The Cytoplasmic segment spans residues 79 to 97; the sequence is PEMLIDFFVERKIISFDEC. C97 and C179 are joined by a disulfide. The chain crosses the membrane as a helical span at residues 98-118; sequence IAQLFFLHFAGASEMFLLTVM. Residues 119-142 lie on the Extracellular side of the membrane; that stretch reads AFDLYTAICRPLHYATIMNQRLCC. The helical transmembrane segment at 143 to 163 threads the bilayer; it reads ILVALSWRGGFIHSIIQVALI. Over 164 to 204 the chain is Cytoplasmic; that stretch reads VRLPFCGPNELDSYFCDITQVVRIACANTFPEELVMICSSG. Residues 205–225 form a helical membrane-spanning segment; the sequence is LISVVCLIALLMSYAFLLALL. Over 226–238 the chain is Extracellular; the sequence is KKLSGSGENTNRA. The chain crosses the membrane as a helical span at residues 239–259; sequence VSTCYSHITIVVLMFGPSIYI. The Cytoplasmic portion of the chain corresponds to 260 to 270; that stretch reads YARPFDSFSLD. Residues 271 to 291 form a helical membrane-spanning segment; it reads KVVSVFNTLIFPLHNPIIYTL. Residues 292-313 are Extracellular-facing; that stretch reads RNKEVKAAMRKLVTKYILCKEK.

The protein belongs to the G-protein coupled receptor 1 family.

It is found in the membrane. Its function is as follows. Odorant receptor. The protein is Olfactory receptor 4M2 of Homo sapiens (Human).